The chain runs to 324 residues: UPF0158 protein CPn_0518/CP_0235/CPj0518/CpB0539 (324 aa).

This sequence belongs to the UPF0158 family.

This chain is UPF0158 protein CPn_0518/CP_0235/CPj0518/CpB0539, found in Chlamydia pneumoniae (Chlamydophila pneumoniae).